Here is a 192-residue protein sequence, read N- to C-terminus: Orotate phosphoribosyltransferase (192 aa).

Residues Arg-101, Lys-102, Lys-105, His-107, and 129-137 (EDVITTGGS) contribute to the 5-phospho-alpha-D-ribose 1-diphosphate site. Residues Thr-133 and Arg-161 each contribute to the orotate site.

Belongs to the purine/pyrimidine phosphoribosyltransferase family. PyrE subfamily. As to quaternary structure, homodimer. The cofactor is Mg(2+).

The enzyme catalyses orotidine 5'-phosphate + diphosphate = orotate + 5-phospho-alpha-D-ribose 1-diphosphate. It participates in pyrimidine metabolism; UMP biosynthesis via de novo pathway; UMP from orotate: step 1/2. Catalyzes the transfer of a ribosyl phosphate group from 5-phosphoribose 1-diphosphate to orotate, leading to the formation of orotidine monophosphate (OMP). The polypeptide is Orotate phosphoribosyltransferase (Sorangium cellulosum (strain So ce56) (Polyangium cellulosum (strain So ce56))).